The sequence spans 297 residues: Acetyl-coenzyme A carboxylase carboxyl transferase subunit beta (297 aa).

The CoA carboxyltransferase N-terminal domain maps to 25-294 (LWVKCPETGQ…VPPKGRLPAP (270 aa)).

Belongs to the AccD/PCCB family. As to quaternary structure, acetyl-CoA carboxylase is a heterohexamer composed of biotin carboxyl carrier protein (AccB), biotin carboxylase (AccC) and two subunits each of ACCase subunit alpha (AccA) and ACCase subunit beta (AccD).

The protein resides in the cytoplasm. The catalysed reaction is N(6)-carboxybiotinyl-L-lysyl-[protein] + acetyl-CoA = N(6)-biotinyl-L-lysyl-[protein] + malonyl-CoA. It participates in lipid metabolism; malonyl-CoA biosynthesis; malonyl-CoA from acetyl-CoA: step 1/1. In terms of biological role, component of the acetyl coenzyme A carboxylase (ACC) complex. Biotin carboxylase (BC) catalyzes the carboxylation of biotin on its carrier protein (BCCP) and then the CO(2) group is transferred by the transcarboxylase to acetyl-CoA to form malonyl-CoA. In Azorhizobium caulinodans (strain ATCC 43989 / DSM 5975 / JCM 20966 / LMG 6465 / NBRC 14845 / NCIMB 13405 / ORS 571), this protein is Acetyl-coenzyme A carboxylase carboxyl transferase subunit beta.